We begin with the raw amino-acid sequence, 100 residues long: Thioredoxin (100 aa).

Residues 1-100 (MKHITNKAEL…PKNELKELLK (100 aa)) form the Thioredoxin domain. A disulfide bridge links C29 with C32.

It belongs to the thioredoxin family.

Its function is as follows. Participates in various redox reactions through the reversible oxidation of its active center dithiol to a disulfide and catalyzes dithiol-disulfide exchange reactions. The polypeptide is Thioredoxin (trxA) (Mycoplasmoides gallisepticum (strain R(low / passage 15 / clone 2)) (Mycoplasma gallisepticum)).